The chain runs to 296 residues: Ribosomal RNA small subunit methyltransferase H (296 aa).

S-adenosyl-L-methionine is bound by residues 38–40 (GVH), Glu-57, Phe-88, Asp-103, and His-110.

The protein belongs to the methyltransferase superfamily. RsmH family.

It localises to the cytoplasm. It catalyses the reaction cytidine(1402) in 16S rRNA + S-adenosyl-L-methionine = N(4)-methylcytidine(1402) in 16S rRNA + S-adenosyl-L-homocysteine + H(+). Its function is as follows. Specifically methylates the N4 position of cytidine in position 1402 (C1402) of 16S rRNA. This Borreliella burgdorferi (strain ZS7) (Borrelia burgdorferi) protein is Ribosomal RNA small subunit methyltransferase H.